Reading from the N-terminus, the 494-residue chain is Ribosomal lysine N-methyltransferase 4 (494 aa).

The 241-residue stretch at 25-265 (PKIEIKDLCC…KNEQVYNIYG (241 aa)) folds into the SET domain. Residue Y264 coordinates S-adenosyl-L-methionine.

The protein belongs to the class V-like SAM-binding methyltransferase superfamily. Histone-lysine methyltransferase family. SETD6 subfamily.

The protein localises to the nucleus. Its function is as follows. S-adenosyl-L-methionine-dependent protein-lysine N-methyltransferase that monomethylates 60S ribosomal protein L42 (RPL42A and RPL42B) at 'Lys-55'. This Saccharomyces cerevisiae (strain ATCC 204508 / S288c) (Baker's yeast) protein is Ribosomal lysine N-methyltransferase 4.